Reading from the N-terminus, the 1247-residue chain is F-box/WD repeat-containing protein A (1247 aa).

One can recognise an START domain in the interval 1 to 214 (MQYVNGNDIS…PATVSGRLAK (214 aa)). Disordered stretches follow at residues 484–514 (GNKDGNVVSSKNKRKRNKNNENKNNNNDNII) and 552–576 (QQPQQQQQQPQEQQQNHSQLKKEIK). Residues 552 to 566 (QQPQQQQQQPQEQQQ) show a composition bias toward low complexity. Positions 631–677 (NSGFDNLPEEVVQIIFSNLSAINIVNLSLVCKRFKMATDSPILWKNL) constitute an F-box domain. Disordered stretches follow at residues 697-744 (SNLS…QQQQ) and 833-856 (GQESPINKNSSDNPKPNAYNKRDN). 2 stretches are compositionally biased toward low complexity: residues 707–719 (NSNSGDSADGSSS) and 726–744 (QQQNQQQNQQQNQQQQQQQ). The span at 833–846 (GQESPINKNSSDNP) shows a compositional bias: polar residues. WD repeat units follow at residues 895 to 934 (GHNRAIKAVKSEGNSAITVSTEKKIKFWNLNTGQCIGDYE), 945 to 984 (DHTQKSSCIWPLSDYTKVHIGHKNGTVTMVDFIEQPIEVI), 988 to 1025 (RPTNLADGFDFTFPGKYLIWEHTIIHYWDVETSTLLWN), 1029 to 1073 (AHTK…CINT), 1076 to 1114 (GHSYAVNCIEPIGDYMALTGSTDKTLKLWDLRQASTFIS), 1119 to 1158 (KHTGPIRCISYQEKNGIVLSGSDDGSIIAFNLDNWNLSNI), and 1218 to 1247 (NHESAVTCIESDEAGFISGSQNGLVLRWDF).

Component of an SCF complex including at least culA. Formation of this complex appears to require activity of the MAP kinase erk2. Interacts with regA.

Its function is as follows. Substrate recognition component of a SCF (SKP1-CUL1-F-box protein) E3 ubiquitin-protein ligase complex which mediates the ubiquitination and subsequent proteasomal degradation of target proteins. May target the cAMP phosphodiesterase regA for degradation leading to an increase in cAMP and PKA activity. Promotes development of prestalk cells as opposed to prespores within the developing fruiting body. Required for culmination and fruiting body development. The sequence is that of F-box/WD repeat-containing protein A (fbxA) from Dictyostelium discoideum (Social amoeba).